The primary structure comprises 418 residues: Phosphoglycerate kinase (418 aa).

(2R)-3-phosphoglycerate contacts are provided by V23, D24, F25, N26, Q39, R40, S63, H64, G66, R67, L122, R123, H170, and R171. ADP is bound at residue G214. G214 lines the CDP pocket. AMP-binding residues include A215 and K216. A215 serves as a coordination point for ATP. Position 215 (A215) interacts with Mg(2+). D219 is a CDP binding site. D219 contacts Mg(2+). Residue K220 coordinates AMP. K220 serves as a coordination point for ATP. G238 is a binding site for ADP. G238 contacts CDP. Residues G239 and G313 each coordinate AMP. G239 and G313 together coordinate ATP. CDP contacts are provided by G338, A340, and F343. Position 343 (F343) interacts with ADP. Residue E344 coordinates AMP. 3 residues coordinate ATP: E344, D375, and T376. D375 provides a ligand contact to Mg(2+).

It belongs to the phosphoglycerate kinase family. As to quaternary structure, monomer. Requires Mg(2+) as cofactor.

The protein resides in the cytoplasm. The protein localises to the mitochondrion. The enzyme catalyses (2R)-3-phosphoglycerate + ATP = (2R)-3-phospho-glyceroyl phosphate + ADP. Its pathway is carbohydrate degradation; glycolysis; pyruvate from D-glyceraldehyde 3-phosphate: step 2/5. Catalyzes one of the two ATP producing reactions in the glycolytic pathway via the reversible conversion of 1,3-diphosphoglycerate to 3-phosphoglycerate. Both L- and D- forms of purine and pyrimidine nucleotides can be used as substrates, but the activity is much lower on pyrimidines. Negatively regulates the biosynthesis of acetyl-CoA from pyruvate in the mitochondrion. This is Phosphoglycerate kinase (pgk-1) from Neurospora crassa (strain ATCC 24698 / 74-OR23-1A / CBS 708.71 / DSM 1257 / FGSC 987).